The following is a 524-amino-acid chain: BEL1-like homeodomain protein 3 (524 aa).

Residues 171–187 (SRYLKPTQQLLDEVVSV) form an SR/KY domain region. Basic and acidic residues-rich tracts occupy residues 195 to 205 (NKKMKNDKGQD) and 216 to 235 (EDDK…ELQS). The interval 195–236 (NKKMKNDKGQDFHNGSSDNITEDDKSQSQELSPSERQELQSK) is disordered. A BELL domain region spans residues 229-300 (ERQELQSKKS…CLRDAIKEQI (72 aa)). Positions 346 to 408 (AWRPQRGLPE…NARVRLWKPM (63 aa)) form a DNA-binding region, homeobox. Positions 429 to 463 (QDTKKMQETSQLKHEDSSSSQQQNQGNNNNNIPYT) are disordered. Positions 430-445 (DTKKMQETSQLKHEDS) are enriched in basic and acidic residues. The span at 446-459 (SSSQQQNQGNNNNN) shows a compositional bias: low complexity.

The protein belongs to the TALE/BELL homeobox family. In terms of assembly, may form heterodimeric complex with the TALE/KNOX protein STM. Interacts with OFP1, OFP2, OFP3, OFP4, OFP5 and OFP15.

The protein localises to the nucleus. Functionally, transcription factor that is responsive of the nuclear import of SHOOT MERISTEMLESS (STM). This chain is BEL1-like homeodomain protein 3 (BLH3), found in Arabidopsis thaliana (Mouse-ear cress).